Reading from the N-terminus, the 178-residue chain is Endoribonuclease YbeY (178 aa).

Zn(2+) is bound by residues H118, H122, and H128.

Belongs to the endoribonuclease YbeY family. The cofactor is Zn(2+).

It is found in the cytoplasm. Single strand-specific metallo-endoribonuclease involved in late-stage 70S ribosome quality control and in maturation of the 3' terminus of the 16S rRNA. The polypeptide is Endoribonuclease YbeY (Mycolicibacterium gilvum (strain PYR-GCK) (Mycobacterium gilvum (strain PYR-GCK))).